The sequence spans 859 residues: MEVATSSTEITIQTDRDPSSNNNGSCAVASSTASAVFRKIEFHPARKPFNGFSNGRSDFKIETLNPCSSNQRLLSAPSAKKPDSSDLLEHGFEPDLTFSITFRKIGAGLQNLGNTCFLNSVLQCLTYTEPLAATLQTAAHQKYCHVAGFCALCAIQKHVRTARQANGRILAPKDLVSNLRCISRNFRNCRQEDAHEYMINLLECMHKCSLPSGVPSESSDAYRRSLVHKIFGGSLRSQVKCEQCSHCSNKFDPFLDLSLDISKADSLQRALSRFTAVELLDNGAKVYQCERCKQKVKAKKQLTVSKAPYVLTVHLKRFEAHRSEKIDRKVDFTSAIDMKPFVSGPHEGNLKYTLYGVLVHYGRSSHSGHYACFVRTSSGMWYSLDDNRVVQVSEKTVFNQKAYMLFYVRDRQNAVPKNSVPVVKKESFATNRASLIVASNIKDQVNGSTVIKECGFGALVANGLAPLKSCGPSTPAVLTQKDLNAKETQNNAISNVEAKEILETENGSAPVKTCDLAAPTVLVQKDLNTKEIFQKEVPLPQANGEGSLVKEDSKAACLILPEKVSPHLDGSANAQTLVKLPTLGPKAENSVEEKNSLNNLNEPANSLKVINVSVGNPPVEKAVLIDQTMGHHLEESATSIESLKLTSERETLTTPKKTRKPKTKTLKVEFKFFKLALGLRKKKVQRRERLSTTVAGEIISEELLSKKRVKYQDTSLIAPSKMISSSDGAVTSDQQQPVGSSDLSEASQNAKRKRESVLLQKEAVNILTRGVPETVVAKWDEEISASQKRGSKSEGASSIGYVADEWDEEYDRGKKKKIRIKEESYRGPNPFQMLASKRQKETKKKWTQSITDAKTAYRI.

The segment covering 1–24 (MEVATSSTEITIQTDRDPSSNNNG) has biased composition (polar residues). The interval 1–26 (MEVATSSTEITIQTDRDPSSNNNGSC) is disordered. Positions 107–410 (AGLQNLGNTC…KAYMLFYVRD (304 aa)) constitute a USP domain. Cys116 (nucleophile) is an active-site residue. Residue His369 is the Proton acceptor of the active site. 2 disordered regions span residues 722–749 (MISS…ASQN) and 822–859 (EESY…AYRI).

The protein belongs to the peptidase C19 family.

The enzyme catalyses Thiol-dependent hydrolysis of ester, thioester, amide, peptide and isopeptide bonds formed by the C-terminal Gly of ubiquitin (a 76-residue protein attached to proteins as an intracellular targeting signal).. Its function is as follows. Recognizes and hydrolyzes the peptide bond at the C-terminal Gly of ubiquitin. Involved in the processing of poly-ubiquitin precursors as well as that of ubiquitinated proteins. The polypeptide is Ubiquitin carboxyl-terminal hydrolase 23 (UBP23) (Arabidopsis thaliana (Mouse-ear cress)).